Consider the following 196-residue polypeptide: MAERWRNTALLVIDMQNDFIEEGAVTQVKGGKSIVPNVIRVVELARQRGILVIWVVREHDRQGRDVELFRRHNYSSEKVGPVIKGTVGAELVDGLMINEEDDYKIVKTRFSAFFSTNLHSFLQTSGVTKLVIAGVQTPNCIRQTVFDAVALDYPNVTVITDATAAATPEIHTANILDMKNIGVKTPTLHEWSEELA.

Belongs to the isochorismatase family.

In terms of biological role, does not possess nicotinamidase activity in vitro. This is Probable inactive nicotinamidase At3g16190 from Arabidopsis thaliana (Mouse-ear cress).